The following is a 457-amino-acid chain: Phosphomethylpyrimidine synthase (457 aa).

Substrate is bound by residues Asn-80, Met-109, Tyr-139, His-175, 195-197, 236-239, and Glu-275; these read SRG and DSLR. Zn(2+) is bound at residue His-279. Tyr-302 is a substrate binding site. His-343 serves as a coordination point for Zn(2+). [4Fe-4S] cluster is bound by residues Cys-423, Cys-426, and Cys-431.

It belongs to the ThiC family. [4Fe-4S] cluster serves as cofactor.

It catalyses the reaction 5-amino-1-(5-phospho-beta-D-ribosyl)imidazole + S-adenosyl-L-methionine = 4-amino-2-methyl-5-(phosphooxymethyl)pyrimidine + CO + 5'-deoxyadenosine + formate + L-methionine + 3 H(+). The protein operates within cofactor biosynthesis; thiamine diphosphate biosynthesis. Catalyzes the synthesis of the hydroxymethylpyrimidine phosphate (HMP-P) moiety of thiamine from aminoimidazole ribotide (AIR) in a radical S-adenosyl-L-methionine (SAM)-dependent reaction. The sequence is that of Phosphomethylpyrimidine synthase from Nostoc punctiforme (strain ATCC 29133 / PCC 73102).